The following is a 345-amino-acid chain: Anthranilate phosphoribosyltransferase (345 aa).

Residues Gly-86, 89 to 90, Thr-94, 96 to 99, 114 to 122, and Ser-126 contribute to the 5-phospho-alpha-D-ribose 1-diphosphate site; these read GD, NIST, and KHGGRGVSS. Gly-86 contributes to the anthranilate binding site. Ser-98 is a binding site for Mg(2+). Arg-172 contributes to the anthranilate binding site. Mg(2+)-binding residues include Asp-231 and Glu-232.

It belongs to the anthranilate phosphoribosyltransferase family. In terms of assembly, homodimer. The cofactor is Mg(2+).

It catalyses the reaction N-(5-phospho-beta-D-ribosyl)anthranilate + diphosphate = 5-phospho-alpha-D-ribose 1-diphosphate + anthranilate. It functions in the pathway amino-acid biosynthesis; L-tryptophan biosynthesis; L-tryptophan from chorismate: step 2/5. Its function is as follows. Catalyzes the transfer of the phosphoribosyl group of 5-phosphorylribose-1-pyrophosphate (PRPP) to anthranilate to yield N-(5'-phosphoribosyl)-anthranilate (PRA). This is Anthranilate phosphoribosyltransferase from Ralstonia pickettii (strain 12J).